A 1670-amino-acid chain; its full sequence is Hemolymph clottable protein (1670 aa).

An N-terminal signal peptide occupies residues 1-14 (MKALILLLLGACQA). Positions 15 to 674 (LQPGLEYQYR…FANFVTTTIY (660 aa)) are vittelogenin. The Vitellogenin domain occupies 15–764 (LQPGLEYQYR…LKIDGQQRGL (750 aa)). The N-linked (GlcNAc...) asparagine glycan is linked to Asn106. Low complexity predominate over residues 198–231 (SSYTTKTKSKTSSKTSSKTSSKTSSKTSKTGKTS). The interval 198–236 (SSYTTKTKSKTSSKTSSKTSSKTSSKTSKTGKTSPGQLA) is disordered. N-linked (GlcNAc...) asparagine glycans are attached at residues Asn319, Asn459, and Asn1301. Residues 1390-1550 (VSCTIDETKV…SWASPGEGCA (161 aa)) enclose the VWFD domain. Cystine bridges form between Cys1392/Cys1513 and Cys1414/Cys1549.

Homodimer; disulfide-linked. Also exists as oligomers. Post-translationally, glycosylated. Contains mannose and N-acetylglucosamine. In terms of processing, substrate of transglutaminase. In terms of tissue distribution, widely expressed with highest levels in gill and heart. Not expressed in hemocytes.

It is found in the secreted. Functionally, forms stable clots in the presence of calcium. The polypeptide is Hemolymph clottable protein (Penaeus monodon (Giant tiger prawn)).